A 324-amino-acid chain; its full sequence is FCS-Like Zinc finger 11 (324 aa).

The FLZ-type zinc finger occupies 266 to 309 (NFLGICNFCNKKLGGGDDIYMYREKSFCSEECRSEEMMIDEEDL).

It belongs to the FLZ family. As to quaternary structure, interacts with KIN10 and KIN11 via its FLZ-type zinc finger domain. Forms heterodimer with FLZ2 in vitro.

The protein localises to the cytoplasm. It localises to the nucleus. In terms of biological role, may act as an adapter to facilitate the interaction of SnRK1 complex with effector proteins, conferring tissue- and stimulus-type specific differences in the SnRK1 regulation pathway. The sequence is that of FCS-Like Zinc finger 11 from Arabidopsis thaliana (Mouse-ear cress).